Here is a 296-residue protein sequence, read N- to C-terminus: Cytidine deaminase (296 aa).

CMP/dCMP-type deaminase domains follow at residues 47-167 (ELNE…FGPS) and 186-296 (DSND…VEPE). 88 to 90 (NIE) provides a ligand contact to substrate. H101 is a binding site for Zn(2+). The active-site Proton donor is E103. Zn(2+) is bound by residues C128 and C131.

It belongs to the cytidine and deoxycytidylate deaminase family. As to quaternary structure, homodimer. The cofactor is Zn(2+).

It catalyses the reaction cytidine + H2O + H(+) = uridine + NH4(+). The catalysed reaction is 2'-deoxycytidine + H2O + H(+) = 2'-deoxyuridine + NH4(+). In terms of biological role, this enzyme scavenges exogenous and endogenous cytidine and 2'-deoxycytidine for UMP synthesis. In Shewanella halifaxensis (strain HAW-EB4), this protein is Cytidine deaminase.